The primary structure comprises 337 residues: Putative 2-aminoethylphosphonate-binding periplasmic protein (337 aa).

Positions 1 to 21 (MKLSRLALLSVFALASAPSWA) are cleaved as a signal peptide.

The protein belongs to the bacterial solute-binding protein 1 family.

The protein resides in the periplasm. Probably part of the PhnSTUV complex (TC 3.A.1.11.5) involved in 2-aminoethylphosphonate import. The protein is Putative 2-aminoethylphosphonate-binding periplasmic protein (phnS) of Salmonella typhi.